A 980-amino-acid chain; its full sequence is Vacuolar protein sorting-associated protein 11 homolog (980 aa).

A CHCR repeat occupies 407–554; it reads YKETIGMLEP…GRDLLIHARD (148 aa). The RING-type; atypical zinc-finger motif lies at 803–843; that stretch reads CSACDTPLQLPTVHFLCKHAYHVHCFESYNMDGSDKCPACQ. Positions 886–898 are enriched in basic and acidic residues; the sequence is TKKTKKSEAKKDP. The segment at 886–980 is disordered; the sequence is TKKTKKSEAK…APAPSTNPFD (95 aa). Composition is skewed to polar residues over residues 917–937 and 947–960; these read TTISRTMSTVSSNMATPSRQR and TNPFFNSDSGTRLS.

This sequence belongs to the VPS11 family. Probable core component of at least two putative endosomal tethering complexes, the homotypic fusion and vacuole protein sorting (HOPS) complex and the class C core vacuole/endosome tethering (CORVET) complex. Their common core is composed of the class C Vps proteins vps-11, vps-16 and vps-18, which in HOPS further associates with vps-33.1, vps-39 and vps-41 and in CORVET with vps-8 and vps-33.2.

The protein resides in the late endosome membrane. The protein localises to the lysosome membrane. Functionally, plays a role in vesicle-mediated protein trafficking to lysosomal compartments including the endocytic membrane transport pathways. Believed to act as a core component of the putative HOPS and CORVET endosomal tethering complexes which are proposed to be involved in the rab-5-to-rab-7 endosome conversion probably implicating sand-1, and via binding SNAREs and SNARE complexes to mediate tethering and docking events during SNARE-mediated membrane fusion. The HOPS complex is proposed to be recruited to Rab7 on the late endosomal membrane and to regulate late endocytic, phagocytic and autophagic traffic towards lysosomes. Within the HOPS complex, contributes to the normal development of gut granules in embryonic and adult intestinal cells. The CORVET complex is proposed to function as a Rab5 effector to mediate early endosome fusion probably in specific endosome subpopulations. Required for fusion of endosomes and autophagosomes with lysosomes. Involved in cargo transport from early to late endosomes and required for the transition from early to late endosomes. Possibly has a role in clearance of apoptotic cells during programmed cell death. The polypeptide is Vacuolar protein sorting-associated protein 11 homolog (Caenorhabditis elegans).